The sequence spans 414 residues: NADH-ubiquinone oxidoreductase chain 4 (414 aa).

10 consecutive transmembrane segments (helical) span residues 18 to 38 (LVQL…MIGV), 47 to 67 (IAAF…LMSI), 96 to 116 (IIFI…PLHL), 126 to 146 (PTAG…YGYI), 160 to 180 (YFPI…IATL), 188 to 208 (IVAY…FSGV), 216 to 236 (IILM…IGVI), 254 to 274 (MMPI…AFPI), 293 to 313 (IIIA…SFWL), and 375 to 395 (VNIF…IVGM).

Belongs to the complex I subunit 4 family.

The protein resides in the mitochondrion membrane. The catalysed reaction is a ubiquinone + NADH + 5 H(+)(in) = a ubiquinol + NAD(+) + 4 H(+)(out). In terms of biological role, core subunit of the mitochondrial membrane respiratory chain NADH dehydrogenase (Complex I) that is believed to belong to the minimal assembly required for catalysis. Complex I functions in the transfer of electrons from NADH to the respiratory chain. The immediate electron acceptor for the enzyme is believed to be ubiquinone. The sequence is that of NADH-ubiquinone oxidoreductase chain 4 (nad4) from Dictyostelium citrinum (Slime mold).